The sequence spans 406 residues: Succinylornithine transaminase (406 aa).

At lysine 252 the chain carries N6-(pyridoxal phosphate)lysine.

The protein belongs to the class-III pyridoxal-phosphate-dependent aminotransferase family. AstC subfamily. Pyridoxal 5'-phosphate is required as a cofactor.

It carries out the reaction N(2)-succinyl-L-ornithine + 2-oxoglutarate = N-succinyl-L-glutamate 5-semialdehyde + L-glutamate. It functions in the pathway amino-acid degradation; L-arginine degradation via AST pathway; L-glutamate and succinate from L-arginine: step 3/5. Its function is as follows. Catalyzes the transamination of N(2)-succinylornithine and alpha-ketoglutarate into N(2)-succinylglutamate semialdehyde and glutamate. Can also act as an acetylornithine aminotransferase. The chain is Succinylornithine transaminase from Escherichia coli O7:K1 (strain IAI39 / ExPEC).